The chain runs to 440 residues: Gap junction gamma-2 protein (440 aa).

Residues 1–21 (MTNMSWSFLTRLLEEIHNHST) are Cytoplasmic-facing. Residues 22–42 (FVGKVWLTVLVVFRIVLTAVG) traverse the membrane as a helical segment. The Extracellular segment spans residues 43-78 (GESIYSDEQSKFTCNTRQPGCDNVCYDAFAPLSHVR). A helical membrane pass occupies residues 79–99 (FWVFQIVVISTPSVMYLGYAV). The Cytoplasmic segment spans residues 100–223 (HRLARASEQE…AQLVVRAAFE (124 aa)). The interval 108–199 (QERRRALRRR…TPGPAGQHDG (92 aa)) is disordered. The segment covering 112 to 124 (RALRRRPGTRRLP) has biased composition (basic residues). The span at 136–149 (PDTTDLGEAEPILA) shows a compositional bias: low complexity. Residues 150-173 (LEEDEDEEPGAPEGPGEDTEEERA) show a composition bias toward acidic residues. Residues 224-244 (VAFLVGQYLLYGFEVPPFFAC) form a helical membrane-spanning segment. The Extracellular portion of the chain corresponds to 245-264 (SRQPCPHVVDCFVSRPTEKT). The chain crosses the membrane as a helical span at residues 265–285 (VFLLVMYVVSCLCLLLNLCEM). At 286–440 (AHLGLGSAQD…SRDGKATVWI (155 aa)) the chain is on the cytoplasmic side. A disordered region spans residues 369–440 (DRDSPPCAGL…SRDGKATVWI (72 aa)). Ser-372 carries the phosphoserine modification. A compositionally biased stretch (low complexity) spans 388–401 (VGGLASGTGSATSG).

Belongs to the connexin family. Gamma-type subfamily. A connexon is composed of a hexamer of connexins. Interacts with TJP1. In terms of tissue distribution, mainly expressed by oligodendrocytes in the central nervous system (at protein level).

The protein resides in the cell membrane. The protein localises to the cell junction. It localises to the gap junction. In terms of biological role, one gap junction consists of a cluster of closely packed pairs of transmembrane channels, the connexons, through which materials of low MW diffuse from one cell to a neighboring cell. May play a role in myelination in central and peripheral nervous systems. The chain is Gap junction gamma-2 protein (Gjc2) from Mus musculus (Mouse).